The sequence spans 144 residues: D-aminoacyl-tRNA deacylase (144 aa).

The Gly-cisPro motif, important for rejection of L-amino acids motif lies at 136–137 (GP).

This sequence belongs to the DTD family. Homodimer.

The protein resides in the cytoplasm. It carries out the reaction glycyl-tRNA(Ala) + H2O = tRNA(Ala) + glycine + H(+). The enzyme catalyses a D-aminoacyl-tRNA + H2O = a tRNA + a D-alpha-amino acid + H(+). An aminoacyl-tRNA editing enzyme that deacylates mischarged D-aminoacyl-tRNAs. Also deacylates mischarged glycyl-tRNA(Ala), protecting cells against glycine mischarging by AlaRS. Acts via tRNA-based rather than protein-based catalysis; rejects L-amino acids rather than detecting D-amino acids in the active site. By recycling D-aminoacyl-tRNA to D-amino acids and free tRNA molecules, this enzyme counteracts the toxicity associated with the formation of D-aminoacyl-tRNA entities in vivo and helps enforce protein L-homochirality. This is D-aminoacyl-tRNA deacylase from Haemophilus influenzae (strain PittEE).